The primary structure comprises 194 residues: MRLVLLGPPGAGKGTQALRLVQRHGIVQLSTGDMLRAAVAAGTPVGLKAKAVMESGGLVSDEIVIGIIAERLDQPDARKGFILDGFPRTVAQADALDKLLADKGLKLDAVIELKVDQAKLLDRILNRAAEAKAKGEPVRKDDDPEVFKTRLEAYNRDTAVVAPYYSARGQLQQIDGMAPIEKVTQAIDSILETA.

10-15 (GAGKGT) contacts ATP. The tract at residues 30–59 (STGDMLRAAVAAGTPVGLKAKAVMESGGLV) is NMP. Residues Thr-31, Arg-36, 57–59 (GLV), 85–88 (GFPR), and Gln-92 each bind AMP. Positions 126-142 (NRAAEAKAKGEPVRKDD) are LID. Position 127 (Arg-127) interacts with ATP. 2 residues coordinate AMP: Arg-139 and Arg-150. Position 178 (Ala-178) interacts with ATP.

Belongs to the adenylate kinase family. In terms of assembly, monomer.

It localises to the cytoplasm. It carries out the reaction AMP + ATP = 2 ADP. It functions in the pathway purine metabolism; AMP biosynthesis via salvage pathway; AMP from ADP: step 1/1. Functionally, catalyzes the reversible transfer of the terminal phosphate group between ATP and AMP. Plays an important role in cellular energy homeostasis and in adenine nucleotide metabolism. In Azorhizobium caulinodans (strain ATCC 43989 / DSM 5975 / JCM 20966 / LMG 6465 / NBRC 14845 / NCIMB 13405 / ORS 571), this protein is Adenylate kinase.